We begin with the raw amino-acid sequence, 168 residues long: MAEPWGNELASAAARGDLEQLTSLLQNNVNVNAQNGFGRTALQVMKLGNPEIARRLLLRGANPDLKDRTGFAVIHDAARAGFLDTLQTLLEFQADVNIEDNEGNLPLHLAAKEGHLRVVEFLVKHTASNVGHRNHKGDTACDLARLYGRNEVVSLMQANGAGGATNLQ.

ANK repeat units follow at residues 4-33 (PWGN…NVNA), 37-65 (FGRT…NPDL), 69-98 (TGFA…DVNI), and 102-132 (EGNL…NVGH).

It belongs to the CDKN2 cyclin-dependent kinase inhibitor family. In terms of assembly, heterodimer of p18 with CDK6. As to expression, highest levels found in skeletal muscle. Also found in pancreas and heart.

Functionally, interacts strongly with CDK6, weakly with CDK4. Inhibits cell growth and proliferation with a correlated dependence on endogenous retinoblastoma protein RB. This chain is Cyclin-dependent kinase 4 inhibitor C (CDKN2C), found in Homo sapiens (Human).